The sequence spans 394 residues: Argininosuccinate synthase (394 aa).

Residue 8-16 participates in ATP binding; that stretch reads AYSGGLDTS. L-citrulline contacts are provided by Tyr-86 and Ser-91. Gly-116 provides a ligand contact to ATP. Thr-118, Asn-122, and Asp-123 together coordinate L-aspartate. Residue Asn-122 coordinates L-citrulline. L-citrulline-binding residues include Arg-126, Ser-172, Ser-181, Glu-256, and Tyr-268.

This sequence belongs to the argininosuccinate synthase family. Type 1 subfamily. As to quaternary structure, homotetramer.

Its subcellular location is the cytoplasm. The catalysed reaction is L-citrulline + L-aspartate + ATP = 2-(N(omega)-L-arginino)succinate + AMP + diphosphate + H(+). The protein operates within amino-acid biosynthesis; L-arginine biosynthesis; L-arginine from L-ornithine and carbamoyl phosphate: step 2/3. This chain is Argininosuccinate synthase, found in Methanococcoides burtonii (strain DSM 6242 / NBRC 107633 / OCM 468 / ACE-M).